Reading from the N-terminus, the 133-residue chain is Small ribosomal subunit protein uS19 (133 aa).

The protein belongs to the universal ribosomal protein uS19 family.

Its function is as follows. Protein S19 forms a complex with S13 that binds strongly to the 16S ribosomal RNA. The protein is Small ribosomal subunit protein uS19 of Thermococcus gammatolerans (strain DSM 15229 / JCM 11827 / EJ3).